Reading from the N-terminus, the 613-residue chain is MAAVEAAAEPVTVVAAVGPKAKDEEEEEEEPLPPCEAVRWAPVGAVAEARPGATAFLEEATAEEPGAAPGSPPDSPGRTLRRLRAERRRLDSALLALSSHFAQVQFRLRQVVRGAPAEQQRLLRELEDFAFRGCPHVLGYEGPGDPASDEGDGLPGDRPWLRGEDQSEQEKQERLETQREKQKELILQLKTQLDDLETFAYQEGSYDSLPQSVVLERQRVIIDELIKKLDMNLNEDISSLSTEELRQRVDAAVAQIVNPARVKEQLVEQLKTQIRDLEMFINFIQDEVGSPLQTGGGHCECKAGGKTGNGCSRTGSSRTPPGNSKTKAEDVKKVRETGLHLMRRALAVLQIFAVSQFGCATGQIPPTLWQRVQADRDYSPLLKRLEVSVDRVKQLALRQQPHDHVITSANLQDLSLGGKDELTMAVRKELTVAVRDLLAHGLYASSPGMSLVMAPIACLLPAFSSAPEAMHPWELFVKYYHAKNGRAYVESPARKLSQSFALPVTGGTVVTPKQSLLTAIHMVLTEHDPFKRSADSELKALVCMALNEQRLVSWVNLICKSGSLIEPHYQPWSYMAHTGFESALNLLSRLSSLKFSLPVDLAVRQLKNIKDAF.

The disordered stretch occupies residues 15-36 (AAVGPKAKDEEEEEEEPLPPCE). Phosphothreonine is present on Thr-54. A compositionally biased stretch (low complexity) spans 57 to 69 (LEEATAEEPGAAP). Disordered regions lie at residues 57 to 79 (LEEA…PGRT), 140 to 177 (YEGP…RLET), and 305 to 330 (GKTG…KAED). A phosphoserine mark is found at Ser-71 and Ser-75. Residues 159-177 (PWLRGEDQSEQEKQERLET) are compositionally biased toward basic and acidic residues. Residues 160–235 (WLRGEDQSEQ…IKKLDMNLNE (76 aa)) are a coiled coil. Polar residues predominate over residues 309–325 (NGCSRTGSSRTPPGNSK). The RUN domain occupies 421–602 (ELTMAVRKEL…LKFSLPVDLA (182 aa)). Residue Ser-497 is modified to Phosphoserine.

In terms of biological role, may play a role as p53/TP53 inhibitor and thus may have oncogenic activity. In Homo sapiens (Human), this protein is RUN domain-containing protein 1 (RUNDC1).